We begin with the raw amino-acid sequence, 532 residues long: CTP synthase (532 aa).

Residues 1 to 267 (MTKYIFVTGG…DDIVLEHLQL (267 aa)) form an amidoligase domain region. Ser13 is a CTP binding site. Ser13 lines the UTP pocket. 14–19 (SIGKGI) contacts ATP. Tyr54 contacts L-glutamine. Asp71 is a binding site for ATP. The Mg(2+) site is built by Asp71 and Glu141. Residues 148–150 (DIE), 188–193 (KTKPTQ), and Lys224 each bind CTP. UTP is bound by residues 188 to 193 (KTKPTQ) and Lys224. Residues 292–532 (RIGLVGKYVS…DFVGAALNNK (241 aa)) enclose the Glutamine amidotransferase type-1 domain. Gly354 provides a ligand contact to L-glutamine. Cys381 acts as the Nucleophile; for glutamine hydrolysis in catalysis. L-glutamine is bound by residues 382–385 (LGMQ), Glu405, and Arg462. Residues His507 and Glu509 contribute to the active site.

Belongs to the CTP synthase family. Homotetramer.

It catalyses the reaction UTP + L-glutamine + ATP + H2O = CTP + L-glutamate + ADP + phosphate + 2 H(+). The enzyme catalyses L-glutamine + H2O = L-glutamate + NH4(+). The catalysed reaction is UTP + NH4(+) + ATP = CTP + ADP + phosphate + 2 H(+). The protein operates within pyrimidine metabolism; CTP biosynthesis via de novo pathway; CTP from UDP: step 2/2. Allosterically activated by GTP, when glutamine is the substrate; GTP has no effect on the reaction when ammonia is the substrate. The allosteric effector GTP functions by stabilizing the protein conformation that binds the tetrahedral intermediate(s) formed during glutamine hydrolysis. Inhibited by the product CTP, via allosteric rather than competitive inhibition. Functionally, catalyzes the ATP-dependent amination of UTP to CTP with either L-glutamine or ammonia as the source of nitrogen. Regulates intracellular CTP levels through interactions with the four ribonucleotide triphosphates. The protein is CTP synthase of Listeria innocua serovar 6a (strain ATCC BAA-680 / CLIP 11262).